The sequence spans 61 residues: Large ribosomal subunit protein uL30 (61 aa).

Belongs to the universal ribosomal protein uL30 family. In terms of assembly, part of the 50S ribosomal subunit.

The polypeptide is Large ribosomal subunit protein uL30 (Parafrankia sp. (strain EAN1pec)).